The following is a 652-amino-acid chain: Thioredoxin reductase 3 (652 aa).

Positions methionine 1–arginine 12 are enriched in pro residues. The interval methionine 1 to glutamate 62 is disordered. The residue at position 34 (arginine 34) is an Asymmetric dimethylarginine; alternate. At arginine 34 the chain carries Omega-N-methylarginine; alternate. Residue serine 50 is modified to Phosphoserine. Residues arginine 65–aspartate 165 enclose the Glutaredoxin domain. Aspartate 167–phenylalanine 196 lines the FAD pocket. The cysteines at positions 212 and 217 are disulfide-linked. Lysine 388 is modified (N6-succinyllysine). Histidine 625 serves as the catalytic Proton acceptor. Residues cysteine 650–selenocysteine 651 constitute a cross-link (cysteinyl-selenocysteine (Cys-Sec)). Selenocysteine 651 is a non-standard amino acid (selenocysteine).

This sequence belongs to the class-I pyridine nucleotide-disulfide oxidoreductase family. In terms of assembly, homodimer. Requires FAD as cofactor. In terms of tissue distribution, expressed preferentially in testis where it is found in spermatids and spermatocytes but not in sperm. In elongating spermatids, expressed at the site of mitochondrial sheath formation. Low levels in other tissues including heart, lung, liver, kidney, brain, muscle and prostate.

It is found in the cytoplasm. Its subcellular location is the nucleus. The protein localises to the microsome. It localises to the endoplasmic reticulum. It catalyses the reaction [thioredoxin]-dithiol + NADP(+) = [thioredoxin]-disulfide + NADPH + H(+). Functionally, displays thioredoxin reductase, glutaredoxin and glutathione reductase activities. Catalyzes disulfide bond isomerization. Promotes disulfide bond formation between GPX4 and various sperm proteins and may play a role in sperm maturation by promoting formation of sperm structural components. The protein is Thioredoxin reductase 3 of Mus musculus (Mouse).